A 179-amino-acid polypeptide reads, in one-letter code: MIP18 family protein C144.16 (179 aa).

Residues 1 to 26 (MSANLQNENPEVKELNQLPSRVEEEE) form a disordered region.

It belongs to the MIP18 family.

In terms of biological role, may play a role in chromosome segregation through establishment of sister chromatid cohesion. The polypeptide is MIP18 family protein C144.16 (Schizosaccharomyces pombe (strain 972 / ATCC 24843) (Fission yeast)).